Reading from the N-terminus, the 389-residue chain is MSRRRAIQPSPALRIGPIELASPVVLAPMAGVTNVAFRALCRQLEQSKVGTVSGLYVCEMVTARALIERHPVTMHMTTFSADESPRSLQLYTVDPDTTYAAARMIAGEGLADHIDMNFGCPVPKVTKRGGGAALPFKRRLFGQIVAAAVRATEGTDIPVTVKFRIGIDDAHHTHLDAGRIAEAEGAAAVALHARTAAQRYSGTADWEQIARLKQHVRTIPVLGNGDIYDAGDALAMMSTTGCDGVVIGRGCLGRPWLFAELSAAFTGSPAPTPPTLGEVADIIRRHGTLLAAHFGEDKGMRDIRKHIAWYLHGFPAGSALRRALAMVKTFDELDCLLDRLDGTVPFPDSATGARGRQGSPARVALPDGWLTDPDDCRVPEGADAMGSGG.

Residues 28-30 (PMA) and glutamine 89 each bind FMN. The Proton donor role is filled by cysteine 120. FMN contacts are provided by residues lysine 162, 224-226 (NGD), and 248-249 (GR).

This sequence belongs to the Dus family. Requires FMN as cofactor.

It carries out the reaction a 5,6-dihydrouridine in tRNA + NAD(+) = a uridine in tRNA + NADH + H(+). The catalysed reaction is a 5,6-dihydrouridine in tRNA + NADP(+) = a uridine in tRNA + NADPH + H(+). Functionally, catalyzes the synthesis of 5,6-dihydrouridine (D), a modified base found in the D-loop of most tRNAs, via the reduction of the C5-C6 double bond in target uridines. The chain is Probable tRNA-dihydrouridine synthase (dus) from Mycobacterium tuberculosis (strain CDC 1551 / Oshkosh).